The chain runs to 277 residues: Small ribosomal subunit protein uS3 (277 aa).

Positions 43–111 (IRELMSKGMD…QIQLNILEVK (69 aa)) constitute a KH type-2 domain. A disordered region spans residues 217–277 (AAQQAAAPSS…AEANNAEGGK (61 aa)). The span at 245-258 (NDRNDRGGRRERDS) shows a compositional bias: basic and acidic residues. Residues 259–277 (AAAPQQNSAAEANNAEGGK) are compositionally biased toward low complexity.

The protein belongs to the universal ribosomal protein uS3 family. Part of the 30S ribosomal subunit. Forms a tight complex with proteins S10 and S14.

Binds the lower part of the 30S subunit head. Binds mRNA in the 70S ribosome, positioning it for translation. The polypeptide is Small ribosomal subunit protein uS3 (Kocuria rhizophila (strain ATCC 9341 / DSM 348 / NBRC 103217 / DC2201)).